Here is a 538-residue protein sequence, read N- to C-terminus: Cytochrome c-552 (538 aa).

Positions 1–55 (MKIYLRFVWILIIILNFLLNLFITTNGVIIVNAFKKSLIVAASFASLSLFNSATA) are cleaved as a signal peptide. Residue H133 participates in heme c binding. Heme contacts are provided by C161, C164, and K165. C199, C202, H203, C264, C267, and H268 together coordinate heme c. Residues E270, Y271, K316, and Q318 each contribute to the Ca(2+) site. Y271 contributes to the substrate binding site. A substrate-binding site is contributed by H319. Residues H330, C337, C340, H341, H356, C369, C372, H373, and H448 each contribute to the heme c site.

It belongs to the cytochrome c-552 family. Ca(2+) serves as cofactor. Requires heme c as cofactor.

The protein localises to the periplasm. It catalyses the reaction 6 Fe(III)-[cytochrome c] + NH4(+) + 2 H2O = 6 Fe(II)-[cytochrome c] + nitrite + 8 H(+). It functions in the pathway nitrogen metabolism; nitrate reduction (assimilation). Its function is as follows. Catalyzes the reduction of nitrite to ammonia, consuming six electrons in the process. This chain is Cytochrome c-552, found in Haemophilus influenzae (strain ATCC 51907 / DSM 11121 / KW20 / Rd).